Reading from the N-terminus, the 372-residue chain is 4-hydroxy-3-methylbut-2-en-1-yl diphosphate synthase (flavodoxin) (372 aa).

The [4Fe-4S] cluster site is built by cysteine 270, cysteine 273, cysteine 305, and glutamate 312.

This sequence belongs to the IspG family. Requires [4Fe-4S] cluster as cofactor.

It carries out the reaction (2E)-4-hydroxy-3-methylbut-2-enyl diphosphate + oxidized [flavodoxin] + H2O + 2 H(+) = 2-C-methyl-D-erythritol 2,4-cyclic diphosphate + reduced [flavodoxin]. Its pathway is isoprenoid biosynthesis; isopentenyl diphosphate biosynthesis via DXP pathway; isopentenyl diphosphate from 1-deoxy-D-xylulose 5-phosphate: step 5/6. In terms of biological role, converts 2C-methyl-D-erythritol 2,4-cyclodiphosphate (ME-2,4cPP) into 1-hydroxy-2-methyl-2-(E)-butenyl 4-diphosphate. In Salmonella choleraesuis (strain SC-B67), this protein is 4-hydroxy-3-methylbut-2-en-1-yl diphosphate synthase (flavodoxin).